The chain runs to 214 residues: Urease accessory protein UreG (214 aa).

23 to 30 contacts GTP; sequence GPVGSGKT.

The protein belongs to the SIMIBI class G3E GTPase family. UreG subfamily. Homodimer. UreD, UreF and UreG form a complex that acts as a GTP-hydrolysis-dependent molecular chaperone, activating the urease apoprotein by helping to assemble the nickel containing metallocenter of UreC. The UreE protein probably delivers the nickel.

The protein resides in the cytoplasm. Functionally, facilitates the functional incorporation of the urease nickel metallocenter. This process requires GTP hydrolysis, probably effectuated by UreG. This Bordetella bronchiseptica (strain ATCC BAA-588 / NCTC 13252 / RB50) (Alcaligenes bronchisepticus) protein is Urease accessory protein UreG.